Reading from the N-terminus, the 358-residue chain is Probable dual-specificity RNA methyltransferase RlmN 1 (358 aa).

Residues 101 to 326 form the Radical SAM core domain; sequence MQAGGTLCIS…REKGFYTLLR (226 aa). C108 and C337 are disulfide-bonded. Positions 115, 119, and 122 each coordinate [4Fe-4S] cluster. Residues 162–163, S194, 218–220, and N294 contribute to the S-adenosyl-L-methionine site; these read GE and SLN. Catalysis depends on C337, which acts as the S-methylcysteine intermediate.

This sequence belongs to the radical SAM superfamily. RlmN family. The cofactor is [4Fe-4S] cluster.

The protein resides in the cytoplasm. It carries out the reaction adenosine(2503) in 23S rRNA + 2 reduced [2Fe-2S]-[ferredoxin] + 2 S-adenosyl-L-methionine = 2-methyladenosine(2503) in 23S rRNA + 5'-deoxyadenosine + L-methionine + 2 oxidized [2Fe-2S]-[ferredoxin] + S-adenosyl-L-homocysteine. The catalysed reaction is adenosine(37) in tRNA + 2 reduced [2Fe-2S]-[ferredoxin] + 2 S-adenosyl-L-methionine = 2-methyladenosine(37) in tRNA + 5'-deoxyadenosine + L-methionine + 2 oxidized [2Fe-2S]-[ferredoxin] + S-adenosyl-L-homocysteine. Its function is as follows. Specifically methylates position 2 of adenine 2503 in 23S rRNA and position 2 of adenine 37 in tRNAs. The chain is Probable dual-specificity RNA methyltransferase RlmN 1 from Protochlamydia amoebophila (strain UWE25).